Consider the following 299-residue polypeptide: Recombination-associated protein RdgC (299 aa).

The protein belongs to the RdgC family.

Its subcellular location is the cytoplasm. It is found in the nucleoid. Functionally, may be involved in recombination. This Neisseria meningitidis serogroup B (strain ATCC BAA-335 / MC58) protein is Recombination-associated protein RdgC.